Consider the following 255-residue polypeptide: tRNA (guanine-N(1)-)-methyltransferase (255 aa).

Residues G119 and 139 to 144 (IGDFIL) contribute to the S-adenosyl-L-methionine site.

The protein belongs to the RNA methyltransferase TrmD family. In terms of assembly, homodimer.

It is found in the cytoplasm. The enzyme catalyses guanosine(37) in tRNA + S-adenosyl-L-methionine = N(1)-methylguanosine(37) in tRNA + S-adenosyl-L-homocysteine + H(+). Specifically methylates guanosine-37 in various tRNAs. The chain is tRNA (guanine-N(1)-)-methyltransferase from Pseudoalteromonas translucida (strain TAC 125).